Consider the following 238-residue polypeptide: 2-C-methyl-D-erythritol 4-phosphate cytidylyltransferase (238 aa).

The protein belongs to the IspD/TarI cytidylyltransferase family. IspD subfamily.

The catalysed reaction is 2-C-methyl-D-erythritol 4-phosphate + CTP + H(+) = 4-CDP-2-C-methyl-D-erythritol + diphosphate. Its pathway is isoprenoid biosynthesis; isopentenyl diphosphate biosynthesis via DXP pathway; isopentenyl diphosphate from 1-deoxy-D-xylulose 5-phosphate: step 2/6. Functionally, catalyzes the formation of 4-diphosphocytidyl-2-C-methyl-D-erythritol from CTP and 2-C-methyl-D-erythritol 4-phosphate (MEP). This is 2-C-methyl-D-erythritol 4-phosphate cytidylyltransferase from Acinetobacter baumannii (strain SDF).